Here is a 486-residue protein sequence, read N- to C-terminus: ATP synthase subunit beta (486 aa).

164–171 (GGAGVGKT) provides a ligand contact to ATP.

Belongs to the ATPase alpha/beta chains family. In terms of assembly, F-type ATPases have 2 components, CF(1) - the catalytic core - and CF(0) - the membrane proton channel. CF(1) has five subunits: alpha(3), beta(3), gamma(1), delta(1), epsilon(1). CF(0) has four main subunits: a(1), b(1), b'(1) and c(9-12).

It is found in the cellular thylakoid membrane. The enzyme catalyses ATP + H2O + 4 H(+)(in) = ADP + phosphate + 5 H(+)(out). In terms of biological role, produces ATP from ADP in the presence of a proton gradient across the membrane. The catalytic sites are hosted primarily by the beta subunits. The polypeptide is ATP synthase subunit beta (Prochlorococcus marinus (strain MIT 9515)).